A 261-amino-acid polypeptide reads, in one-letter code: Calcium-binding protein 8 (261 aa).

Residues 1–39 (MRLPEQPGEGKPENEKKGDGGALGGGEEPPRSQAPDFPT) form a disordered region. At 1–234 (MRLPEQPGEG…QNRQTCVRKS (234 aa)) the chain is on the cytoplasmic side. Over residues 8-19 (GEGKPENEKKGD) the composition is skewed to basic and acidic residues. 2 EF-hand domains span residues 78-113 (EELDEIREAFRVLDRDGNGFISKQELGMAMRSLGYM) and 114-149 (PSEVELAIIMQRLDMDGDGQVDFDEFMTILGPKLVS). Ca(2+)-binding residues include Asp-91, Asp-93, Asn-95, Glu-102, Asp-127, Asp-129, Asp-131, Gln-133, and Glu-138. The helical; Anchor for type IV membrane protein transmembrane segment at 235 to 255 (LICAFAMAFIISVMLIAANQI) threads the bilayer. The Extracellular portion of the chain corresponds to 256-261 (LRSGME).

In terms of assembly, interacts with PI4KB. This binding competes with FREQ/NCS1 binding in a calcium-dependent manner. Brain specific.

The protein localises to the golgi apparatus. It localises to the trans-Golgi network membrane. Its subcellular location is the cytoplasm. The protein resides in the perinuclear region. It is found in the cell membrane. Its function is as follows. Negatively regulates Golgi-to-plasma membrane trafficking by interacting with PI4KB and inhibiting its activity. May play a role in the physiology of neurons and is potentially important in memory and learning. In Homo sapiens (Human), this protein is Calcium-binding protein 8 (CALN1).